Reading from the N-terminus, the 248-residue chain is MAGLNSLEAVKRKIQALQQQADEAEDRAQGLQRELDGERERREKAEGDVAALNRRIQLVEEELDRAQERLATALQKLEEAEKAADESERGMKVIENRAMKDEEKMEIQEMQLKEAKHIAEEADRKYEEVARKLVILEGELERAEERAEVSELKCGDLEEELKNVTNNLKSLEAASEKYSEKEDKYEEEIKLLSDKLKEAETRAEFAERTVAKLEKTIDDLEEKLAQAKEENVGLHQTLDQTLDELNCI.

At Ala2 the chain carries N-acetylalanine. Residues 2-248 (AGLNSLEAVK…DQTLDELNCI (247 aa)) adopt a coiled-coil conformation. Ser6 is modified (phosphoserine). The segment at 16 to 47 (ALQQQADEAEDRAQGLQRELDGERERREKAEG) is disordered. Residues 33-47 (RELDGERERREKAEG) show a composition bias toward basic and acidic residues. Residues Lys177 and Lys215 each carry the N6-acetyllysine modification. Phosphothreonine is present on Thr216.

It belongs to the tropomyosin family. Homodimer. Heterodimer of an alpha (TPM1, TPM3 or TPM4) and a beta (TPM2) chain.

The protein localises to the cytoplasm. It localises to the cytoskeleton. Its function is as follows. Binds to actin filaments in muscle and non-muscle cells. Plays a central role, in association with the troponin complex, in the calcium dependent regulation of vertebrate striated muscle contraction. Smooth muscle contraction is regulated by interaction with caldesmon. In non-muscle cells is implicated in stabilizing cytoskeleton actin filaments. Binds calcium. In Equus caballus (Horse), this protein is Tropomyosin alpha-4 chain (TPM4).